The primary structure comprises 325 residues: Acetyl-coenzyme A carboxylase carboxyl transferase subunit alpha (325 aa).

Residues 38 to 292 enclose the CoA carboxyltransferase C-terminal domain; it reads RLEDRLAKLQ…DETLKQSLKT (255 aa).

The protein belongs to the AccA family. As to quaternary structure, acetyl-CoA carboxylase is a heterohexamer composed of biotin carboxyl carrier protein (AccB), biotin carboxylase (AccC) and two subunits each of ACCase subunit alpha (AccA) and ACCase subunit beta (AccD).

It is found in the cytoplasm. The catalysed reaction is N(6)-carboxybiotinyl-L-lysyl-[protein] + acetyl-CoA = N(6)-biotinyl-L-lysyl-[protein] + malonyl-CoA. The protein operates within lipid metabolism; malonyl-CoA biosynthesis; malonyl-CoA from acetyl-CoA: step 1/1. Its activity is regulated as follows. Inhibited by pyrrolidine dione antibiotics moiramide B (CPD1) and CPD2. Functionally, component of the acetyl coenzyme A carboxylase (ACC) complex. First, biotin carboxylase catalyzes the carboxylation of biotin on its carrier protein (BCCP) and then the CO(2) group is transferred by the carboxyltransferase to acetyl-CoA to form malonyl-CoA. In Bacillus subtilis (strain 168), this protein is Acetyl-coenzyme A carboxylase carboxyl transferase subunit alpha.